The primary structure comprises 161 residues: Cytochrome c-type biogenesis protein CcmE (161 aa).

The Cytoplasmic segment spans residues 1-8 (MNPRRKKR). A helical; Signal-anchor for type II membrane protein membrane pass occupies residues 9-29 (LTLAVALVFGLGATIGLMLYA). Topologically, residues 30–161 (LSQNMDLFYT…SDEQKQGRVQ (132 aa)) are periplasmic. Histidine 129 and tyrosine 133 together coordinate heme.

The protein belongs to the CcmE/CycJ family.

The protein resides in the cell inner membrane. Its function is as follows. Heme chaperone required for the biogenesis of c-type cytochromes. Transiently binds heme delivered by CcmC and transfers the heme to apo-cytochromes in a process facilitated by CcmF and CcmH. The sequence is that of Cytochrome c-type biogenesis protein CcmE from Photobacterium profundum (strain SS9).